A 219-amino-acid polypeptide reads, in one-letter code: Octanoyltransferase (219 aa).

In terms of domain architecture, BPL/LPL catalytic spans 37–219 (EHSPDQLWIL…DFNDVQVILQ (183 aa)). Residues 76 to 83 (RGGQVTWH), 143 to 145 (SLG), and 156 to 158 (GLA) contribute to the substrate site. The active-site Acyl-thioester intermediate is Cys174.

This sequence belongs to the LipB family.

It is found in the cytoplasm. It catalyses the reaction octanoyl-[ACP] + L-lysyl-[protein] = N(6)-octanoyl-L-lysyl-[protein] + holo-[ACP] + H(+). It functions in the pathway protein modification; protein lipoylation via endogenous pathway; protein N(6)-(lipoyl)lysine from octanoyl-[acyl-carrier-protein]: step 1/2. In terms of biological role, catalyzes the transfer of endogenously produced octanoic acid from octanoyl-acyl-carrier-protein onto the lipoyl domains of lipoate-dependent enzymes. Lipoyl-ACP can also act as a substrate although octanoyl-ACP is likely to be the physiological substrate. The chain is Octanoyltransferase from Acinetobacter baylyi (strain ATCC 33305 / BD413 / ADP1).